The sequence spans 501 residues: L-arabinose isomerase (501 aa).

E306, E333, H350, and H450 together coordinate Mn(2+).

It belongs to the arabinose isomerase family. In terms of assembly, homohexamer. It depends on Mn(2+) as a cofactor.

It carries out the reaction beta-L-arabinopyranose = L-ribulose. It participates in carbohydrate degradation; L-arabinose degradation via L-ribulose; D-xylulose 5-phosphate from L-arabinose (bacterial route): step 1/3. Its function is as follows. Catalyzes the conversion of L-arabinose to L-ribulose. This is L-arabinose isomerase from Serratia proteamaculans (strain 568).